The sequence spans 130 residues: Small ribosomal subunit protein uS9 (130 aa).

The protein belongs to the universal ribosomal protein uS9 family.

The protein is Small ribosomal subunit protein uS9 of Shewanella pealeana (strain ATCC 700345 / ANG-SQ1).